Here is a 121-residue protein sequence, read N- to C-terminus: MEYLLQEYLPILVFLGMASALAIVLILAAAVIAVRNPDPEKVSAYECGFNAFDDARMKFDVRFYLVSILFIIFDLEVAFLFPWAVSFASLSDVAFWGLMVFLAVLTVGFAYEWKKGALEWA.

3 helical membrane passes run 11 to 31 (ILVF…AAAV), 65 to 85 (LVSI…PWAV), and 93 to 113 (VAFW…AYEW).

It belongs to the complex I subunit 3 family. NDH-1 is composed of at least 14 different subunits, Nqo1 to Nqo14. The complex has a L-shaped structure, with the hydrophobic arm (subunits Nqo7, Nqo8, Nqo10 to Nqo14) embedded in the inner membrane and the hydrophilic peripheral arm (subunits Nqo1 to Nqo6, Nqo9) protruding into the bacterial cytoplasm. The hydrophilic domain contains all the redox centers.

The protein localises to the cell inner membrane. It carries out the reaction a quinone + NADH + 5 H(+)(in) = a quinol + NAD(+) + 4 H(+)(out). Its function is as follows. NDH-1 shuttles electrons from NADH, via FMN and iron-sulfur (Fe-S) centers, to quinones in the respiratory chain. The immediate electron acceptor for the enzyme in this species is believed to be ubiquinone. Couples the redox reaction to proton translocation (for every two electrons transferred, four hydrogen ions are translocated across the cytoplasmic membrane), and thus conserves the redox energy in a proton gradient. The polypeptide is NADH-quinone oxidoreductase subunit 7 (nqo7) (Paracoccus denitrificans).